A 572-amino-acid chain; its full sequence is Sulfate adenylyltransferase (572 aa).

The tract at residues 1 to 169 (MANTPHGGVL…IQAINKLNHY (169 aa)) is N-terminal. The catalytic stretch occupies residues 170–394 (DYVGLRYTPA…LRESHPPRAK (225 aa)). Residue glutamine 197 participates in sulfate binding. Residues 197–200 (QTRN) and 291–294 (GRDH) each bind ATP. Active-site residues include threonine 198, arginine 199, and asparagine 200. Arginine 199 contacts sulfate. Position 295 (alanine 295) interacts with sulfate. Methionine 333 is an ATP binding site. The tract at residues 395 to 572 (QGFTIFLTGH…LLESQGFFGN (178 aa)) is allosteric regulation domain; adenylyl-sulfate kinase-like. 3'-phosphoadenylyl sulfate is bound by residues 434-437 (ETVR), arginine 451, 477-478 (IA), and lysine 515.

It in the N-terminal section; belongs to the sulfate adenylyltransferase family. In the C-terminal section; belongs to the APS kinase family. Homohexamer. Dimer of trimers.

Its subcellular location is the cytoplasm. It carries out the reaction sulfate + ATP + H(+) = adenosine 5'-phosphosulfate + diphosphate. Its pathway is sulfur metabolism; hydrogen sulfide biosynthesis; sulfite from sulfate: step 1/3. With respect to regulation, allosterically inhibited by 3'-phosphoadenosine 5'-phosphosulfate (PAPS). Catalyzes the first intracellular reaction of sulfate assimilation, forming adenosine-5'-phosphosulfate (APS) from inorganic sulfate and ATP. Plays an important role in sulfate activation as a component of the biosynthesis pathway of sulfur-containing amino acids. The protein is Sulfate adenylyltransferase of Yarrowia lipolytica (strain CLIB 122 / E 150) (Yeast).